The chain runs to 161 residues: Large ribosomal subunit protein uL15 (161 aa).

The segment at 1–43 (MKLSDIADNAGARKKRMRVGRGIGSGKGKTSGRGGKGQTARSG) is disordered. Over residues 21–37 (RGIGSGKGKTSGRGGKG) the composition is skewed to gly residues.

It belongs to the universal ribosomal protein uL15 family. In terms of assembly, part of the 50S ribosomal subunit.

Binds to the 23S rRNA. In Bradyrhizobium sp. (strain BTAi1 / ATCC BAA-1182), this protein is Large ribosomal subunit protein uL15.